The chain runs to 452 residues: Isocitrate dehydrogenase [NADP], mitochondrial (452 aa).

The transit peptide at 1 to 39 (MAGYLRVVRSLCRASGSRPAWAPAALTAPTSQEQTRRHY) directs the protein to the mitochondrion. An N6-acetyllysine mark is found at Lys45, Lys48, Lys67, and Lys69. An N6-acetyllysine; alternate mark is found at Lys80 and Lys106. Lys80 and Lys106 each carry N6-succinyllysine; alternate. NADP(+) is bound by residues 115-117 (TIT) and Arg122. Position 117 (Thr117) interacts with substrate. Residues 134-140 (SPNGTIR) and Arg149 each bind substrate. Lys155 bears the N6-acetyllysine mark. An N6-acetyllysine; alternate modification is found at Lys166. An N6-succinyllysine; alternate modification is found at Lys166. A substrate-binding site is contributed by Arg172. N6-acetyllysine; alternate occurs at positions 180 and 193. An N6-succinyllysine; alternate mark is found at Lys180 and Lys193. Lys199 is modified (N6-acetyllysine). N6-acetyllysine; alternate is present on Lys256. N6-succinyllysine; alternate is present on Lys256. Lys263, Lys272, Lys275, and Lys280 each carry N6-acetyllysine. Residue Lys282 is modified to N6-acetyllysine; alternate. At Lys282 the chain carries N6-succinyllysine; alternate. Asp291 is a Mn(2+) binding site. Lys299 provides a ligand contact to NADP(+). Residue Asp314 participates in Mn(2+) binding. NADP(+) is bound by residues 349–354 (GTVTRH) and Asn367. Lys384 carries the post-translational modification N6-acetyllysine; alternate. Position 384 is an N6-succinyllysine; alternate (Lys384). Residues Lys400, Lys413, and Lys442 each carry the N6-acetyllysine modification.

Belongs to the isocitrate and isopropylmalate dehydrogenases family. Homodimer. Mg(2+) serves as cofactor. Mn(2+) is required as a cofactor. Acetylation at Lys-413 dramatically reduces catalytic activity. Deacetylated by SIRT3.

It localises to the mitochondrion. It catalyses the reaction D-threo-isocitrate + NADP(+) = 2-oxoglutarate + CO2 + NADPH. Its function is as follows. Plays a role in intermediary metabolism and energy production. It may tightly associate or interact with the pyruvate dehydrogenase complex. The chain is Isocitrate dehydrogenase [NADP], mitochondrial (IDH2) from Macaca fascicularis (Crab-eating macaque).